We begin with the raw amino-acid sequence, 314 residues long: tRNA dimethylallyltransferase (314 aa).

Residue Gly-13 to Thr-20 participates in ATP binding. Thr-15–Thr-20 is a binding site for substrate. The tract at residues Asp-38 to Gln-41 is interaction with substrate tRNA.

It belongs to the IPP transferase family. Monomer. It depends on Mg(2+) as a cofactor.

The enzyme catalyses adenosine(37) in tRNA + dimethylallyl diphosphate = N(6)-dimethylallyladenosine(37) in tRNA + diphosphate. Its function is as follows. Catalyzes the transfer of a dimethylallyl group onto the adenine at position 37 in tRNAs that read codons beginning with uridine, leading to the formation of N6-(dimethylallyl)adenosine (i(6)A). This is tRNA dimethylallyltransferase from Bacillus subtilis (strain 168).